The following is a 382-amino-acid chain: F-box protein At3g27290 (382 aa).

Residues Arg-16–Ser-105 form the F-box domain.

The protein is F-box protein At3g27290 of Arabidopsis thaliana (Mouse-ear cress).